The chain runs to 90 residues: MTSEQNIQTFRDFLTQYNLVAEQCFNSCVNEFGSRTVSGKEESCANNCLDKFLKMTQRVSQRFQEHQLLNAQANGAAIKVENGGKINKIQ.

Residues 24-48 (CFNSCVNEFGSRTVSGKEESCANNC) carry the Twin CX3C motif motif. Intrachain disulfides connect C24–C48 and C28–C44.

Belongs to the small Tim family. Heterohexamer; composed of 3 copies of tim-9/tin-9.1 and 3 copies of tim-10/tin-10, named soluble 70 kDa complex. The complex associates with the tim-22 component of the TIM22 complex. Interacts with multi-pass transmembrane proteins in transit.

The protein resides in the mitochondrion inner membrane. Mitochondrial intermembrane chaperone that participates in the import and insertion of multi-pass transmembrane proteins into the mitochondrial inner membrane. May also be required for the transfer of beta-barrel precursors from the TOM complex to the sorting and assembly machinery (SAM complex) of the outer membrane. Acts as a chaperone-like protein that protects the hydrophobic precursors from aggregation and guide them through the mitochondrial intermembrane space. The chain is Mitochondrial import inner membrane translocase subunit Tim9 (tin-9.1) from Caenorhabditis elegans.